A 210-amino-acid polypeptide reads, in one-letter code: Large ribosomal subunit protein uL3 (210 aa).

The segment at 131 to 154 (GPMSHGSKYHRRVGSMGATTDPGR) is disordered.

The protein belongs to the universal ribosomal protein uL3 family. Part of the 50S ribosomal subunit. Forms a cluster with proteins L14 and L19.

Functionally, one of the primary rRNA binding proteins, it binds directly near the 3'-end of the 23S rRNA, where it nucleates assembly of the 50S subunit. This Thermoanaerobacter pseudethanolicus (strain ATCC 33223 / 39E) (Clostridium thermohydrosulfuricum) protein is Large ribosomal subunit protein uL3.